Consider the following 152-residue polypeptide: Large ribosomal subunit protein bL9 (152 aa).

The protein belongs to the bacterial ribosomal protein bL9 family.

Functionally, binds to the 23S rRNA. In Mycobacterium sp. (strain JLS), this protein is Large ribosomal subunit protein bL9.